Reading from the N-terminus, the 571-residue chain is Urease subunit alpha (571 aa).

The Urease domain occupies 133 to 571 (GGIDTHVHFI…LPLTQRYFLF (439 aa)). Ni(2+) contacts are provided by histidine 138, histidine 140, and lysine 221. Lysine 221 bears the N6-carboxylysine mark. Histidine 223 provides a ligand contact to substrate. Residues histidine 250 and histidine 276 each coordinate Ni(2+). Histidine 324 functions as the Proton donor in the catalytic mechanism. Aspartate 364 lines the Ni(2+) pocket.

Belongs to the metallo-dependent hydrolases superfamily. Urease alpha subunit family. As to quaternary structure, heterotrimer of UreA (gamma), UreB (beta) and UreC (alpha) subunits. Three heterotrimers associate to form the active enzyme. Ni cation serves as cofactor. In terms of processing, carboxylation allows a single lysine to coordinate two nickel ions.

It localises to the cytoplasm. The catalysed reaction is urea + 2 H2O + H(+) = hydrogencarbonate + 2 NH4(+). It participates in nitrogen metabolism; urea degradation; CO(2) and NH(3) from urea (urease route): step 1/1. The chain is Urease subunit alpha from Staphylococcus aureus (strain USA300).